Here is a 737-residue protein sequence, read N- to C-terminus: Palmitoyltransferase akr1 (737 aa).

The segment covering 1–15 (MSSGNSSTGTHTNGN) has biased composition (low complexity). The segment at 1-39 (MSSGNSSTGTHTNGNFATLGSSPPSAVGGKGRAIPPKVT) is disordered. Topologically, residues 1–313 (MSSGNSSTGT…WVRNKSLMSK (313 aa)) are cytoplasmic. ANK repeat units lie at residues 96 to 125 (EGIT…DVNA), 130 to 159 (SVAT…DPLL), 163 to 192 (QGYN…PVDV), 196 to 225 (QGHT…HANA), and 228 to 258 (EGGL…DKFA). 2 helical membrane-spanning segments follow: residues 314–334 (FFFL…SNMV) and 335–355 (VYAA…VAQK). Residues 356–374 (AASQGPSEYRILQKTPYLS) lie on the Cytoplasmic side of the membrane. A helical membrane pass occupies residues 375-395 (GVFAGSLFWVGFRYVFYVLPV). The Lumenal portion of the chain corresponds to 396-401 (TYSTSP). A helical membrane pass occupies residues 402 to 422 (ILNGLFAIFFSLTTYFYIYSM). Over 423–498 (VEDPGFVPKL…DNCVGANNLR (76 aa)) the chain is Cytoplasmic. The 51-residue stretch at 455-505 (NFCVSCMVRRPLRSKHCKRCARCVAKHDHHCPWIDNCVGANNLRHFVLYIT) folds into the DHHC domain. C485 functions as the S-palmitoyl cysteine intermediate in the catalytic mechanism. Residues 499–519 (HFVLYITCLEVGIVLFVQLTF) traverse the membrane as a helical segment. Residues 520–548 (NYINSLPAPAQPQCNIINETLCDFVLRDT) lie on the Lumenal side of the membrane. Residues 549 to 569 (FTLVLDLWVCIQLVWITMLVA) traverse the membrane as a helical segment. Residues 570–737 (VQMIQISRNQ…LSVEDPEQGV (168 aa)) are Cytoplasmic-facing.

This sequence belongs to the DHHC palmitoyltransferase family. AKR/ZDHHC17 subfamily.

It localises to the early endosome membrane. The protein localises to the golgi apparatus membrane. The catalysed reaction is L-cysteinyl-[protein] + hexadecanoyl-CoA = S-hexadecanoyl-L-cysteinyl-[protein] + CoA. In terms of biological role, palmitoyltransferase specific for casein kinase 1. This chain is Palmitoyltransferase akr1 (akr1), found in Aspergillus oryzae (strain ATCC 42149 / RIB 40) (Yellow koji mold).